Reading from the N-terminus, the 449-residue chain is Tubulin alpha-1 chain (449 aa).

8 residues coordinate GTP: glutamine 11, glutamate 71, serine 140, glycine 144, threonine 145, threonine 179, asparagine 206, and asparagine 228. Glutamate 71 provides a ligand contact to Mg(2+). The active site involves glutamate 254.

This sequence belongs to the tubulin family. Dimer of alpha and beta chains. A typical microtubule is a hollow water-filled tube with an outer diameter of 25 nm and an inner diameter of 15 nM. Alpha-beta heterodimers associate head-to-tail to form protofilaments running lengthwise along the microtubule wall with the beta-tubulin subunit facing the microtubule plus end conferring a structural polarity. Microtubules usually have 13 protofilaments but different protofilament numbers can be found in some organisms and specialized cells. Mg(2+) is required as a cofactor.

It is found in the cytoplasm. Its subcellular location is the cytoskeleton. The catalysed reaction is GTP + H2O = GDP + phosphate + H(+). Tubulin is the major constituent of microtubules, a cylinder consisting of laterally associated linear protofilaments composed of alpha- and beta-tubulin heterodimers. Microtubules grow by the addition of GTP-tubulin dimers to the microtubule end, where a stabilizing cap forms. Below the cap, tubulin dimers are in GDP-bound state, owing to GTPase activity of alpha-tubulin. This chain is Tubulin alpha-1 chain (tubA), found in Emericella nidulans (strain FGSC A4 / ATCC 38163 / CBS 112.46 / NRRL 194 / M139) (Aspergillus nidulans).